The chain runs to 338 residues: Tryptophan--tRNA ligase (338 aa).

ATP contacts are provided by residues 11 to 13 (QPS) and 19 to 20 (GN). Residues 12-20 (PSGELSIGN) carry the 'HIGH' region motif. Aspartate 135 is a binding site for L-tryptophan. Residues 147-149 (GSD), valine 189, and 198-202 (KMSKS) each bind ATP. The short motif at 198–202 (KMSKS) is the 'KMSKS' region element.

This sequence belongs to the class-I aminoacyl-tRNA synthetase family. Homodimer.

The protein resides in the cytoplasm. It carries out the reaction tRNA(Trp) + L-tryptophan + ATP = L-tryptophyl-tRNA(Trp) + AMP + diphosphate + H(+). Catalyzes the attachment of tryptophan to tRNA(Trp). This chain is Tryptophan--tRNA ligase, found in Vibrio parahaemolyticus serotype O3:K6 (strain RIMD 2210633).